The chain runs to 201 residues: Recombination protein RecR (201 aa).

The segment at 58-73 adopts a C4-type zinc-finger fold; sequence CGRCGALTDVDPCGIC. The Toprim domain occupies 81-178; sequence ETLCLVSEWD…RVTRLAQGIP (98 aa).

It belongs to the RecR family.

Functionally, may play a role in DNA repair. It seems to be involved in an RecBC-independent recombinational process of DNA repair. It may act with RecF and RecO. This chain is Recombination protein RecR, found in Nitratidesulfovibrio vulgaris (strain DSM 19637 / Miyazaki F) (Desulfovibrio vulgaris).